The primary structure comprises 344 residues: tRNA N6-adenosine threonylcarbamoyltransferase (344 aa).

Residues His-114 and His-118 each coordinate Fe cation. Substrate-binding positions include 136 to 140, Asp-170, Gly-183, Asp-187, and Asn-278; that span reads LVSGG. Asp-306 lines the Fe cation pocket. The segment at 325–344 is disordered; the sequence is PSPLDVPSDPGLPVMQGQVR.

It belongs to the KAE1 / TsaD family. Fe(2+) is required as a cofactor.

The protein resides in the cytoplasm. The catalysed reaction is L-threonylcarbamoyladenylate + adenosine(37) in tRNA = N(6)-L-threonylcarbamoyladenosine(37) in tRNA + AMP + H(+). In terms of biological role, required for the formation of a threonylcarbamoyl group on adenosine at position 37 (t(6)A37) in tRNAs that read codons beginning with adenine. Is involved in the transfer of the threonylcarbamoyl moiety of threonylcarbamoyl-AMP (TC-AMP) to the N6 group of A37, together with TsaE and TsaB. TsaD likely plays a direct catalytic role in this reaction. In Mycobacterium tuberculosis (strain ATCC 25177 / H37Ra), this protein is tRNA N6-adenosine threonylcarbamoyltransferase.